The following is a 513-amino-acid chain: ATP synthase subunit alpha 2 (513 aa).

169 to 176 (GDRQVGKT) is an ATP binding site.

This sequence belongs to the ATPase alpha/beta chains family. In terms of assembly, F-type ATPases have 2 components, CF(1) - the catalytic core - and CF(0) - the membrane proton channel. CF(1) has five subunits: alpha(3), beta(3), gamma(1), delta(1), epsilon(1). CF(0) has three main subunits: a(1), b(2) and c(9-12). The alpha and beta chains form an alternating ring which encloses part of the gamma chain. CF(1) is attached to CF(0) by a central stalk formed by the gamma and epsilon chains, while a peripheral stalk is formed by the delta and b chains.

The protein resides in the cell inner membrane. It catalyses the reaction ATP + H2O + 4 H(+)(in) = ADP + phosphate + 5 H(+)(out). In terms of biological role, produces ATP from ADP in the presence of a proton gradient across the membrane. The alpha chain is a regulatory subunit. The polypeptide is ATP synthase subunit alpha 2 (Psychromonas ingrahamii (strain DSM 17664 / CCUG 51855 / 37)).